A 423-amino-acid chain; its full sequence is MRAEIISVGDELLRGQRVNTNAAVIARMLSAIGVSVSHIVACSDDEADIMATCSAALGRAEVVLVTGGLGPTRDDRTKHAIQQLLGRGTVLDEASYRRIEERMAARGSAVTPLLREQAVVIEGSHVIINSRGTAAGMLLDCGEPFAHHHLILMPGVPVEMEAMMHEGVIPFLTSLSNSVICQTPLKIVGVGETAIAAMLVEIEDAMPPATMLAYLPHTAGVDLMVSSRGNSREAVEAEHQQVVDAIMERVGTLVYATREISLEEVIGEMLLRQTFTVAVAESCTGGLLASRFTDISGASTYFQQGFVVYSNEAKERALGVPHETLVAHGAVSEEVAQGMALGCLEKSGADFALATTGIAGPTGGTPEKPLGTLCYAIAVKGGGVVVCRKVVMQGTREQRKVRFSTAVLREFWMLLKEREASEE.

This sequence belongs to the CinA family.

This chain is CinA-like protein, found in Chlorobium chlorochromatii (strain CaD3).